The sequence spans 600 residues: Aspartate--tRNA(Asp/Asn) ligase (600 aa).

E174 serves as a coordination point for L-aspartate. The tract at residues Q198–K201 is aspartate. R220 is an L-aspartate binding site. Residues R220 to E222 and Q229 contribute to the ATP site. H457 lines the L-aspartate pocket. E491 contacts ATP. R498 lines the L-aspartate pocket. G543–R546 is a binding site for ATP.

The protein belongs to the class-II aminoacyl-tRNA synthetase family. Type 1 subfamily. As to quaternary structure, homodimer.

It localises to the cytoplasm. It carries out the reaction tRNA(Asx) + L-aspartate + ATP = L-aspartyl-tRNA(Asx) + AMP + diphosphate. In terms of biological role, aspartyl-tRNA synthetase with relaxed tRNA specificity since it is able to aspartylate not only its cognate tRNA(Asp) but also tRNA(Asn). Reaction proceeds in two steps: L-aspartate is first activated by ATP to form Asp-AMP and then transferred to the acceptor end of tRNA(Asp/Asn). In Burkholderia mallei (strain NCTC 10247), this protein is Aspartate--tRNA(Asp/Asn) ligase.